A 447-amino-acid polypeptide reads, in one-letter code: GTPase Der (447 aa).

EngA-type G domains are found at residues 3–167 (PVIA…ALPE) and 180–353 (IRLA…KSAN). Residues 9–16 (GRPNVGKS), 56–60 (DTGGF), 119–122 (NKAE), 186–193 (GRPNVGKS), 233–237 (DTAGL), and 298–301 (NKWD) contribute to the GTP site. Residues 354 to 438 (RKMPTPVLTR…PLRIEMKTSS (85 aa)) form the KH-like domain.

Belongs to the TRAFAC class TrmE-Era-EngA-EngB-Septin-like GTPase superfamily. EngA (Der) GTPase family. In terms of assembly, associates with the 50S ribosomal subunit.

Functionally, GTPase that plays an essential role in the late steps of ribosome biogenesis. This Acidovorax sp. (strain JS42) protein is GTPase Der.